A 151-amino-acid chain; its full sequence is Peptide methionine sulfoxide reductase MsrB (151 aa).

The 124-residue stretch at 9 to 132 folds into the MsrB domain; it reads DGELKRTLTK…NSAALKFIPF (124 aa). Residue Cys-121 is the Nucleophile of the active site.

It belongs to the MsrB Met sulfoxide reductase family.

The catalysed reaction is L-methionyl-[protein] + [thioredoxin]-disulfide + H2O = L-methionyl-(R)-S-oxide-[protein] + [thioredoxin]-dithiol. The polypeptide is Peptide methionine sulfoxide reductase MsrB (Mycoplasma pneumoniae (strain ATCC 29342 / M129 / Subtype 1) (Mycoplasmoides pneumoniae)).